We begin with the raw amino-acid sequence, 352 residues long: Phosphoribosylformylglycinamidine cyclo-ligase (352 aa).

Belongs to the AIR synthase family.

The protein resides in the cytoplasm. It catalyses the reaction 2-formamido-N(1)-(5-O-phospho-beta-D-ribosyl)acetamidine + ATP = 5-amino-1-(5-phospho-beta-D-ribosyl)imidazole + ADP + phosphate + H(+). The protein operates within purine metabolism; IMP biosynthesis via de novo pathway; 5-amino-1-(5-phospho-D-ribosyl)imidazole from N(2)-formyl-N(1)-(5-phospho-D-ribosyl)glycinamide: step 2/2. The sequence is that of Phosphoribosylformylglycinamidine cyclo-ligase from Pseudomonas syringae pv. tomato (strain ATCC BAA-871 / DC3000).